A 420-amino-acid polypeptide reads, in one-letter code: Threonine aspartase 1 (420 aa).

The tract at residues 1–23 is disordered; that stretch reads MTMEKGMSSGEGLPSRSSQVSAG. The Nucleophile role is filled by Thr234.

The protein belongs to the Ntn-hydrolase family. In terms of assembly, intramolecular proteolysis generates 2 subunits, alpha and beta, which reassemble through a non-covalent association to form the fully active enzyme.

Functionally, protease responsible for KMT2A/MLL1 processing and activation. It also activates KMT2D/MLL2. Through substrate activation, it controls the expression of HOXA genes, and the expression of key cell cycle regulators including CCNA1, CCNB1, CCNE1 and CDKN2A. This is Threonine aspartase 1 (TASP1) from Homo sapiens (Human).